The sequence spans 264 residues: Undecaprenyl-diphosphatase (264 aa).

Transmembrane regions (helical) follow at residues 15-37 (GLTE…LLGF), 42-62 (AASF…VLYW), 84-104 (YLLF…HDFI), 108-128 (LFNP…ILIV), 143-163 (VTPK…WPGF), 182-202 (IAAE…TGYD), 217-237 (FLAV…KGFI), and 243-263 (LTLR…LFFW).

It belongs to the UppP family.

It localises to the cell inner membrane. The catalysed reaction is di-trans,octa-cis-undecaprenyl diphosphate + H2O = di-trans,octa-cis-undecaprenyl phosphate + phosphate + H(+). Catalyzes the dephosphorylation of undecaprenyl diphosphate (UPP). Confers resistance to bacitracin. The chain is Undecaprenyl-diphosphatase from Maridesulfovibrio salexigens (strain ATCC 14822 / DSM 2638 / NCIMB 8403 / VKM B-1763) (Desulfovibrio salexigens).